A 323-amino-acid chain; its full sequence is Beta-ketoacyl-[acyl-carrier-protein] synthase III (323 aa).

Catalysis depends on residues cysteine 112 and histidine 250. The tract at residues glutamine 251–arginine 255 is ACP-binding. Asparagine 280 is an active-site residue.

Belongs to the thiolase-like superfamily. FabH family. In terms of assembly, homodimer.

The protein resides in the cytoplasm. It carries out the reaction malonyl-[ACP] + acetyl-CoA + H(+) = 3-oxobutanoyl-[ACP] + CO2 + CoA. The protein operates within lipid metabolism; fatty acid biosynthesis. In terms of biological role, catalyzes the condensation reaction of fatty acid synthesis by the addition to an acyl acceptor of two carbons from malonyl-ACP. Catalyzes the first condensation reaction which initiates fatty acid synthesis and may therefore play a role in governing the total rate of fatty acid production. Possesses both acetoacetyl-ACP synthase and acetyl transacylase activities. Its substrate specificity determines the biosynthesis of branched-chain and/or straight-chain of fatty acids. The sequence is that of Beta-ketoacyl-[acyl-carrier-protein] synthase III from Oenococcus oeni (strain ATCC BAA-331 / PSU-1).